The chain runs to 123 residues: Small ribosomal subunit protein uS12 (123 aa).

Residues 1 to 26 form a disordered region; that stretch reads MPTINQLVRKPRKSRSSLNKAPALQH. The residue at position 90 (D90) is a 3-methylthioaspartic acid.

It belongs to the universal ribosomal protein uS12 family. Part of the 30S ribosomal subunit. Contacts proteins S8 and S17. May interact with IF1 in the 30S initiation complex.

Functionally, with S4 and S5 plays an important role in translational accuracy. Interacts with and stabilizes bases of the 16S rRNA that are involved in tRNA selection in the A site and with the mRNA backbone. Located at the interface of the 30S and 50S subunits, it traverses the body of the 30S subunit contacting proteins on the other side and probably holding the rRNA structure together. The combined cluster of proteins S8, S12 and S17 appears to hold together the shoulder and platform of the 30S subunit. The protein is Small ribosomal subunit protein uS12 of Ehrlichia chaffeensis (strain ATCC CRL-10679 / Arkansas).